We begin with the raw amino-acid sequence, 428 residues long: Histone-lysine N-methyltransferase SMYD3 (428 aa).

The residue at position 1 (M1) is an N-acetylmethionine. Residues 4–240 form the SET domain; the sequence is LKVEKFATAK…VGEELTICYL (237 aa). 14–16 contacts S-adenosyl-L-methionine; that stretch reads RGN. T22 carries the phosphothreonine modification. 8 residues coordinate Zn(2+): C49, C52, C62, C65, C71, C75, H83, and C87. An MYND-type zinc finger spans residues 49-87; that stretch reads CDRCLLGKEKLMRCSQCRVAKYCSAKCQKKAWPDHKREC. S-adenosyl-L-methionine is bound by residues Y124, N132, N181, 205–206, Y239, and F259; that span reads NH. The C-terminal domain; essential for histone methyltransferase activity, nuclear localization and mediates interaction with HSP90AA1 stretch occupies residues 272–428; the sequence is DADMLTGDEQ…EECDANIRAS (157 aa).

The protein belongs to the class V-like SAM-binding methyltransferase superfamily. Histone-lysine methyltransferase family. Interacts with HSPCA. Interacts with HELZ. Interacts with POLR2A; the interaction may be indirect and may be mediated by HELZ. Interacts with HSP90AA1; this interaction enhances SMYD3 histone-lysine N-methyltransferase. In terms of tissue distribution, expressed in skeletal muscles and testis. Overexpressed in a majority of colorectal and hepatocellular carcinomas.

It localises to the cytoplasm. It is found in the nucleus. The catalysed reaction is L-lysyl(4)-[histone H3] + 3 S-adenosyl-L-methionine = N(6),N(6),N(6)-trimethyl-L-lysyl(4)-[histone H3] + 3 S-adenosyl-L-homocysteine + 3 H(+). Its activity is regulated as follows. Histone methyltransferase activity strongly stimulated by HSPCA. Its function is as follows. Histone methyltransferase. Specifically methylates 'Lys-4' of histone H3, inducing di- and tri-methylation, but not monomethylation. Also methylates 'Lys-5' of histone H4. Plays an important role in transcriptional activation as a member of an RNA polymerase complex. Binds DNA containing 5'-CCCTCC-3' or 5'-GAGGGG-3' sequences. This Homo sapiens (Human) protein is Histone-lysine N-methyltransferase SMYD3 (SMYD3).